The sequence spans 30 residues: Photosystem I reaction center subunit XII (30 aa).

The chain crosses the membrane as a helical span at residues 7 to 29 (VYTVLLIALLASVLAIRLGSTLY).

Belongs to the PsaM family.

The protein resides in the plastid. The protein localises to the chloroplast thylakoid membrane. This Trieres chinensis (Marine centric diatom) protein is Photosystem I reaction center subunit XII.